We begin with the raw amino-acid sequence, 885 residues long: MGGCVSVSLSCDREVNQFSQWLCVSGSYIQNLSENLASLQKAMGVLNAKRDDVQGRINREEFTGHRRRLAQVQVWLTRIQTIENQFNDLLSTCNAEIQRLCLCGFCSKNVKMSYLYGKRVIVLLREVEGLSSQGVFDIVTEAAPIAEVEELPIQSTIVGQDSMLDKVWNCLMEDKVWIVGLYGMGGVGKTTLLTQINNKFSKLGGGFDVVIWVVVSKNATVHKIQKSIGEKLGLVGKNWDEKNKNQRALDIHNVLRRKKFVLLLDDIWEKVELKVIGVPYPSGENGCKVAFTTHSKEVCGRMGVDNPMEISCLDTGNAWDLLKKKVGENTLGSHPDIPQLARKVSEKCCGLPLALNVIGETMSFKRTIQEWRHATEVLTSATDFSGMEDEILPILKYSYDSLNGEDAKSCFLYCSLFPEDFEIRKEMLIEYWICEGFIKEKQGREKAFNQGYDILGTLVRSSLLLEGAKDKDVVSMHDMVREMALWIFSDLGKHKERCIVQAGIGLDELPEVENWRAVKRMSLMNNNFEKILGSPECVELITLFLQNNYKLVDISMEFFRCMPSLAVLDLSENHSLSELPEEISELVSLQYLDLSGTYIERLPHGLHELRKLVHLKLERTRRLESISGISYLSSLRTLRLRDSKTTLDTGLMKELQLLEHLELITTDISSGLVGELFCYPRVGRCIQHIYIRDHWERPEESVGVLVLPAIHNLCYISIWNCWMWEIMIEKTPWKKNLTNPNFSNLSNVRIEGCDGLKDLTWLLFAPNLINLRVWGCKHLEDIISKEKAASVLEKEILPFQKLECLNLYQLSELKSIYWNALPFQRLRCLDILNNCPKLRKLPLDSKSVVKVEEFVIKYKEKKWIERVEWEDEATQYRFLPTCRLR.

A coiled-coil region spans residues 27-61; it reads SYIQNLSENLASLQKAMGVLNAKRDDVQGRINREE. Positions 141–443 constitute an NB-ARC domain; that stretch reads EAAPIAEVEE…CEGFIKEKQG (303 aa). 183–190 serves as a coordination point for ATP; it reads GMGGVGKT. LRR repeat units lie at residues 517–538, 539–561, 564–586, 588–610, 611–633, 634–655, and 657–679; these read AVKR…PECV, ELIT…FFRC, SLAV…ISEL, SLQY…HELR, KLVH…SYLS, SLRT…MKEL, and LLEH…LFCY.

It belongs to the disease resistance NB-LRR family.

In terms of biological role, disease resistance (R) protein. This chain is Disease resistance protein RFL1 (RFL1), found in Arabidopsis thaliana (Mouse-ear cress).